The chain runs to 821 residues: Serine/threonine-protein kinase CTR1 (821 aa).

Disordered stretches follow at residues 1–76 (MEMP…LNNQ) and 481–502 (NPGG…PSAN). Positions 14 to 25 (SQFSDDQVSVSV) are enriched in low complexity. Polar residues predominate over residues 35–49 (SLSSENRSNHNSGNT). Positions 551–809 (LNIKEKIGAG…TIMDLLRPLI (259 aa)) constitute a Protein kinase domain. Residues 557-565 (IGAGSFGTV) and Lys578 each bind ATP. Asp676 (proton acceptor) is an active-site residue.

This sequence belongs to the protein kinase superfamily. TKL Ser/Thr protein kinase family. RAF subfamily. As to quaternary structure, interacts with EIN2 (via C-terminus). As to expression, expressed in both seedlings and adult plants.

It carries out the reaction L-seryl-[protein] + ATP = O-phospho-L-seryl-[protein] + ADP + H(+). The catalysed reaction is L-threonyl-[protein] + ATP = O-phospho-L-threonyl-[protein] + ADP + H(+). With respect to regulation, kinase activity is inhibited by C24:1-ceramide during hypoxia (e.g. submergences). Its function is as follows. Acts as a negative regulator in the ethylene response pathway. Phosphorylates the cytosolic C-terminal domain of EIN2, preventing the signaling in the absence of ethylene. Interacts with C24:1-ceramide upon hypoxic conditions (e.g. submergences) to in turn regulate EIN2 endoplasmic reticulum (ER)-to-nucleus translocation and EIN3 stabilization. This chain is Serine/threonine-protein kinase CTR1, found in Arabidopsis thaliana (Mouse-ear cress).